The sequence spans 210 residues: Secreted effector protein SteA (210 aa).

It localises to the secreted. It is found in the host cytoplasm. Its function is as follows. Effector proteins function to alter host cell physiology and promote bacterial survival in host tissues. Could be required for passage of bacteria from the peritoneal cavity into the spleen, for survival and replication within host cells, or for avoiding host immune response. The protein is Secreted effector protein SteA (steA) of Salmonella typhimurium (strain 14028s / SGSC 2262).